Reading from the N-terminus, the 127-residue chain is Holo-[acyl-carrier-protein] synthase (127 aa).

2 residues coordinate Mg(2+): D9 and E58.

Belongs to the P-Pant transferase superfamily. AcpS family. It depends on Mg(2+) as a cofactor.

The protein resides in the cytoplasm. The enzyme catalyses apo-[ACP] + CoA = holo-[ACP] + adenosine 3',5'-bisphosphate + H(+). Its function is as follows. Transfers the 4'-phosphopantetheine moiety from coenzyme A to a Ser of acyl-carrier-protein. The chain is Holo-[acyl-carrier-protein] synthase from Shewanella baltica (strain OS223).